The primary structure comprises 86 residues: Beta-mammal/insect toxin To1 (86 aa).

An N-terminal signal peptide occupies residues 1–20; sequence MTRFVLFISCFFLIDMIVEC. In terms of domain architecture, LCN-type CS-alpha/beta spans 22–84; the sequence is KEGYLVGNDG…TWSSATNKCK (63 aa). Disulfide bonds link C32-C83, C36-C58, C44-C64, and C48-C66. Position 84 is a lysine amide (K84).

It belongs to the long (4 C-C) scorpion toxin superfamily. Sodium channel inhibitor family. Beta subfamily. As to expression, expressed by the venom gland.

The protein localises to the secreted. Functionally, beta toxin that show multiple effects. It enhances the open probability at more negative potentials of human Nav1.3/SCN3A and Nav1.6/SCN8A, of the insect channel BgNaV1 and of arachnid VdNaV1 channel. It promotes an important shift in slow inactivation processes as a function of the prepulse voltage in human Nav1.3/SCN3A and Nav1.6/SCN8A and a small shift in Nav1.1/SCN1A, Nav1.2/SCN2A and Nav1.4/SCN4A. Finally, it reduces the peak of sodium currents in Nav1.3/SCN3A (80% inhibition at 70 nM of toxin), Nav1.6/SCN8A (55.3%), Nav1.1/SCN1A (53.3%), Nav1.5/SCN5A (46.7%), Nav1.2/SCN2A (42.7%) and Nav1.4/SCN4A (20%) voltage-gated sodium channels. It has also been shown to affect the sodium current permeability of rat cerebellum granular cells in a partially reversible manner. In vivo, an intraperitoneal injection (20 ug) into mice produces excitability, respiratory problems, convulsions and death, within the first 30 minutes after injection. The chain is Beta-mammal/insect toxin To1 from Tityus obscurus (Amazonian scorpion).